The primary structure comprises 352 residues: UDP-N-acetylglucosamine--N-acetylmuramyl-(pentapeptide) pyrophosphoryl-undecaprenol N-acetylglucosamine transferase 2 (352 aa).

Residues 11–13, Arg164, Ser194, and Gln289 each bind UDP-N-acetyl-alpha-D-glucosamine; that span reads SAG.

It belongs to the glycosyltransferase 28 family. MurG subfamily.

It is found in the cell membrane. It catalyses the reaction di-trans,octa-cis-undecaprenyl diphospho-N-acetyl-alpha-D-muramoyl-L-alanyl-D-glutamyl-meso-2,6-diaminopimeloyl-D-alanyl-D-alanine + UDP-N-acetyl-alpha-D-glucosamine = di-trans,octa-cis-undecaprenyl diphospho-[N-acetyl-alpha-D-glucosaminyl-(1-&gt;4)]-N-acetyl-alpha-D-muramoyl-L-alanyl-D-glutamyl-meso-2,6-diaminopimeloyl-D-alanyl-D-alanine + UDP + H(+). It functions in the pathway cell wall biogenesis; peptidoglycan biosynthesis. Cell wall formation. Catalyzes the transfer of a GlcNAc subunit on undecaprenyl-pyrophosphoryl-MurNAc-pentapeptide (lipid intermediate I) to form undecaprenyl-pyrophosphoryl-MurNAc-(pentapeptide)GlcNAc (lipid intermediate II). The sequence is that of UDP-N-acetylglucosamine--N-acetylmuramyl-(pentapeptide) pyrophosphoryl-undecaprenol N-acetylglucosamine transferase 2 from Bacillus thuringiensis subsp. konkukian (strain 97-27).